Consider the following 506-residue polypeptide: NADH-quinone oxidoreductase subunit N 2 (506 aa).

14 helical membrane-spanning segments follow: residues 11-31 (SLAYFAPELVLIAAALLLVVW), 44-64 (LVILSLAALACSGGLGAYFLA), 82-102 (FSNLFRVIFALVTGAIVLFLV), 117-137 (SGELFTLILVLSLGMNLMAAS), 140-160 (LLLIYLSLELVSVISFVLAGF), 175-195 (VIFGGVASGIMLYGMSWIFGI), 222-242 (VFVGTAFMLAGFGYKISAAPF), 254-274 (PTPVTAFLSVGPKAAGFAVLI), 289-309 (GVATPWPVLFGCLAMATMTVG), 323-345 (LAYSSIAHAGYMLLGFSVFSGAG), 356-376 (YCFMNLGAFMVVMAVAEESGG), 394-414 (AAAMAVFLVSLTGLPPTAGFI), 419-439 (LFSALLAAGGAWSWVIAVVGV), and 472-492 (LLGGTACALAIPTVLLGVYWG).

It belongs to the complex I subunit 2 family. NDH-1 is composed of 14 different subunits. Subunits NuoA, H, J, K, L, M, N constitute the membrane sector of the complex.

The protein localises to the cell inner membrane. The catalysed reaction is a quinone + NADH + 5 H(+)(in) = a quinol + NAD(+) + 4 H(+)(out). Functionally, NDH-1 shuttles electrons from NADH, via FMN and iron-sulfur (Fe-S) centers, to quinones in the respiratory chain. The immediate electron acceptor for the enzyme in this species is believed to be ubiquinone. Couples the redox reaction to proton translocation (for every two electrons transferred, four hydrogen ions are translocated across the cytoplasmic membrane), and thus conserves the redox energy in a proton gradient. The protein is NADH-quinone oxidoreductase subunit N 2 of Sorangium cellulosum (strain So ce56) (Polyangium cellulosum (strain So ce56)).